Here is a 339-residue protein sequence, read N- to C-terminus: Ketol-acid reductoisomerase (NADP(+)) (339 aa).

The region spanning 1–182 (MRVYYDRDAD…GGGRAGIIET (182 aa)) is the KARI N-terminal Rossmann domain. Residues 24-27 (YGSQ), arginine 48, serine 51, threonine 53, and 83-86 (DELQ) each bind NADP(+). The active site involves histidine 108. NADP(+) is bound at residue glycine 134. In terms of domain architecture, KARI C-terminal knotted spans 183 to 328 (TFKEECETDL…AELRAMMPWI (146 aa)). 4 residues coordinate Mg(2+): aspartate 191, glutamate 195, glutamate 227, and glutamate 231. Serine 252 provides a ligand contact to substrate.

Belongs to the ketol-acid reductoisomerase family. It depends on Mg(2+) as a cofactor.

It carries out the reaction (2R)-2,3-dihydroxy-3-methylbutanoate + NADP(+) = (2S)-2-acetolactate + NADPH + H(+). The enzyme catalyses (2R,3R)-2,3-dihydroxy-3-methylpentanoate + NADP(+) = (S)-2-ethyl-2-hydroxy-3-oxobutanoate + NADPH + H(+). Its pathway is amino-acid biosynthesis; L-isoleucine biosynthesis; L-isoleucine from 2-oxobutanoate: step 2/4. It functions in the pathway amino-acid biosynthesis; L-valine biosynthesis; L-valine from pyruvate: step 2/4. Involved in the biosynthesis of branched-chain amino acids (BCAA). Catalyzes an alkyl-migration followed by a ketol-acid reduction of (S)-2-acetolactate (S2AL) to yield (R)-2,3-dihydroxy-isovalerate. In the isomerase reaction, S2AL is rearranged via a Mg-dependent methyl migration to produce 3-hydroxy-3-methyl-2-ketobutyrate (HMKB). In the reductase reaction, this 2-ketoacid undergoes a metal-dependent reduction by NADPH to yield (R)-2,3-dihydroxy-isovalerate. In Beijerinckia indica subsp. indica (strain ATCC 9039 / DSM 1715 / NCIMB 8712), this protein is Ketol-acid reductoisomerase (NADP(+)).